Here is a 173-residue protein sequence, read N- to C-terminus: Lactoylglutathione lyase (173 aa).

The VOC domain maps to 24–170; that stretch reads VFNHTMLRVK…DGYWVEVIQP (147 aa). His27 lines the Ni(2+) pocket. Arg31 is a substrate binding site. Glu93 provides a ligand contact to Ni(2+). Substrate contacts are provided by Asn97, Arg116, and His120. Ni(2+) is bound by residues His120 and Glu166. The Proton donor/acceptor role is filled by Glu166.

The protein belongs to the glyoxalase I family. Monomer. Ni(2+) is required as a cofactor. Requires Zn(2+) as cofactor.

It carries out the reaction (R)-S-lactoylglutathione = methylglyoxal + glutathione. Its pathway is secondary metabolite metabolism; methylglyoxal degradation; (R)-lactate from methylglyoxal: step 1/2. Functionally, catalyzes the conversion of hemimercaptal, formed from methylglyoxal and glutathione, to S-lactoylglutathione. The polypeptide is Lactoylglutathione lyase (gloA) (Pseudomonas putida (Arthrobacter siderocapsulatus)).